Consider the following 708-residue polypeptide: Serine/threonine-protein kinase Nek5 (708 aa).

The Protein kinase domain maps to 4-259 (YDVIKAIGQG…INSILKRPFL (256 aa)). Residues 10 to 18 (IGQGAFGKA) and Lys33 contribute to the ATP site. The Proton acceptor role is filled by Asp128. Disordered stretches follow at residues 376–403 (SYHP…PSQW) and 423–454 (KQLG…FQEL). Basic and acidic residues predominate over residues 440-454 (QELRSNGEEPRFQEL).

It belongs to the protein kinase superfamily. NEK Ser/Thr protein kinase family. NIMA subfamily. The cofactor is Mg(2+).

Its subcellular location is the cell projection. It is found in the cilium. The protein resides in the flagellum. The catalysed reaction is L-seryl-[protein] + ATP = O-phospho-L-seryl-[protein] + ADP + H(+). It carries out the reaction L-threonyl-[protein] + ATP = O-phospho-L-threonyl-[protein] + ADP + H(+). This is Serine/threonine-protein kinase Nek5 (NEK5) from Homo sapiens (Human).